A 61-amino-acid chain; its full sequence is Insect toxin BsIT3 (61 aa).

One can recognise an LCN-type CS-alpha/beta domain in the interval Asp-1 to Asn-61. 4 disulfides stabilise this stretch: Cys-10/Cys-60, Cys-14/Cys-35, Cys-21/Cys-42, and Cys-25/Cys-44.

Belongs to the long (4 C-C) scorpion toxin superfamily. Sodium channel inhibitor family. Beta subfamily. As to expression, expressed by the venom gland.

It localises to the secreted. Functionally, depressant insect beta-toxins cause a transient contraction paralysis followed by a slow flaccid paralysis. They bind voltage-independently at site-4 of sodium channels (Nav) and shift the voltage of activation toward more negative potentials thereby affecting sodium channel activation and promoting spontaneous and repetitive firing. This toxin is active only on insects. This chain is Insect toxin BsIT3, found in Hottentotta tamulus sindicus (Scorpion).